A 398-amino-acid chain; its full sequence is Phosphoglycerate kinase (398 aa).

Substrate contacts are provided by residues 21 to 23 (DFN), arginine 36, 59 to 62 (HLGR), arginine 119, and arginine 157. ATP contacts are provided by residues lysine 208, glycine 296, glutamate 327, and 354-357 (GGDS).

Belongs to the phosphoglycerate kinase family. Monomer.

It localises to the cytoplasm. It catalyses the reaction (2R)-3-phosphoglycerate + ATP = (2R)-3-phospho-glyceroyl phosphate + ADP. Its pathway is carbohydrate degradation; glycolysis; pyruvate from D-glyceraldehyde 3-phosphate: step 2/5. The protein is Phosphoglycerate kinase of Streptococcus equi subsp. zooepidemicus (strain H70).